The following is a 457-amino-acid chain: Multidrug resistance protein MdtK (457 aa).

12 helical membrane passes run 11–31, 53–73, 93–113, 127–147, 160–180, 188–208, 243–263, 276–296, 314–334, 350–370, 387–407, and 418–438; these read LLAL…MGFV, IWLP…PVIA, WLAG…GYII, AVGY…FQVA, GMVM…IFIY, LGGI…FIAM, LPIA…ALLV, IALN…AAVT, AART…IFTV, VVAL…SDSI, IFFI…YILA, and PAGF…LMML.

This sequence belongs to the multi antimicrobial extrusion (MATE) (TC 2.A.66.1) family. MdtK subfamily.

The protein resides in the cell inner membrane. In terms of biological role, multidrug efflux pump that functions probably as a Na(+)/drug antiporter. In Salmonella newport (strain SL254), this protein is Multidrug resistance protein MdtK.